A 280-amino-acid chain; its full sequence is tRNA (guanine-N(1)-)-methyltransferase (280 aa).

Residues 71-94 (DDVSSGTASTQDLQSALPHLSKPR) are disordered. Over residues 74–84 (SSGTASTQDLQ) the composition is skewed to polar residues. S-adenosyl-L-methionine contacts are provided by residues Gly-146 and 170–175 (IGDYVL).

The protein belongs to the RNA methyltransferase TrmD family. As to quaternary structure, homodimer.

The protein resides in the cytoplasm. It catalyses the reaction guanosine(37) in tRNA + S-adenosyl-L-methionine = N(1)-methylguanosine(37) in tRNA + S-adenosyl-L-homocysteine + H(+). Functionally, specifically methylates guanosine-37 in various tRNAs. In Corynebacterium aurimucosum (strain ATCC 700975 / DSM 44827 / CIP 107346 / CN-1) (Corynebacterium nigricans), this protein is tRNA (guanine-N(1)-)-methyltransferase.